Here is a 260-residue protein sequence, read N- to C-terminus: Putative ABC transporter ATP-binding protein PF0068 (260 aa).

The ABC transporter domain maps to 2–234 (IEVKGVWFWY…DLKRYKLEEP (233 aa)). Residue 34–41 (GPNGSGKT) participates in ATP binding.

The protein belongs to the ABC transporter superfamily.

It is found in the cell membrane. In terms of biological role, probably part of an ABC transporter complex. Responsible for energy coupling to the transport system. The chain is Putative ABC transporter ATP-binding protein PF0068 from Pyrococcus furiosus (strain ATCC 43587 / DSM 3638 / JCM 8422 / Vc1).